An 838-amino-acid chain; its full sequence is Phosphatidylethanolamine N-methyltransferase 1 (838 aa).

Over 1 to 48 the chain is Lumenal; sequence MATEIITEKKEIVARTRSSGITFNPPVTHDMVRSLFDPTIKKSFLECC. Residues 49–69 form a helical membrane-spanning segment; it reads ITLTILANFVLCYYLINWFGL. Over 70 to 73 the chain is Cytoplasmic; the sequence is SQAK. The chain crosses the membrane as a helical span at residues 74-94; the sequence is LIFLIQYVYWRLAYNLGIGII. The Lumenal segment spans residues 95–157; that stretch reads LHYQSHYESL…ELNCWLLFRQ (63 aa). Residues 158-178 traverse the membrane as a helical segment; the sequence is FVDLILMQDFTTYIIYVYLSL. Over 179–184 the chain is Cytoplasmic; that stretch reads PTDVSS. A helical membrane pass occupies residues 185-205; the sequence is LINWKSLIGIAMILFNIWVKI. Topologically, residues 206-236 are lumenal; it reads DAHRVVKDYAWYWGDFFFLQDAELTFDGVFN. The helical transmembrane segment at 237-257 threads the bilayer; that stretch reads ISPHPMYSIGYLGYYGLSLIC. Topologically, residues 258 to 261 are cytoplasmic; it reads GDYR. The chain crosses the membrane as a helical span at residues 262-282; it reads VLLVSVGGHFLQFLFLKYVES. At 283-328 the chain is on the lumenal side; sequence PHIERTYGSDSPSNSTQHQIDDLIAKENYDYSRPLINTGILFENFQ. The helical transmembrane segment at 329–349 threads the bilayer; sequence FLRFSDYFTVSTILVLFSWFF. The Cytoplasmic portion of the chain corresponds to 350–356; it reads TSKPSNN. The chain crosses the membrane as a helical span at residues 357 to 377; that stretch reads FLFVLTLLTKLTTWLLTSWIL. The Lumenal segment spans residues 378-403; the sequence is FQQSNRKWFTRLFLKNGYTQIYSYQQ. A helical transmembrane segment spans residues 404 to 424; that stretch reads WQFLYNYSLIVTNTLLFLHTL. Residues 425–435 lie on the Cytoplasmic side of the membrane; it reads SELYSIQSSDG. The helical transmembrane segment at 436-456 threads the bilayer; it reads LNNSHVIFGLLLCAIQIWCNV. Residues 457–517 lie on the Lumenal side of the membrane; that stretch reads ETRDAISDFG…VLMTNFSKTN (61 aa). Residues 518 to 538 form a helical membrane-spanning segment; the sequence is VTLAVLWTVTNLIFVKLIEEP. Over 539–838 the chain is Cytoplasmic; it reads HVSKVYGNGT…DIKEVLDSLN (300 aa).

This sequence belongs to the class VI-like SAM-binding methyltransferase superfamily. CHO2 family.

Its subcellular location is the endoplasmic reticulum membrane. It catalyses the reaction a 1,2-diacyl-sn-glycero-3-phosphoethanolamine + S-adenosyl-L-methionine = a 1,2-diacyl-sn-glycero-3-phospho-N-methylethanolamine + S-adenosyl-L-homocysteine + H(+). The protein operates within phospholipid metabolism; phosphatidylcholine biosynthesis. In terms of biological role, catalyzes the first step of the methylation pathway of phosphatidylcholine biosynthesis, the SAM-dependent methylation of phosphatidylethanolamine (PE) to phosphatidylmonomethylethanolamine (PMME). This Vanderwaltozyma polyspora (strain ATCC 22028 / DSM 70294 / BCRC 21397 / CBS 2163 / NBRC 10782 / NRRL Y-8283 / UCD 57-17) (Kluyveromyces polysporus) protein is Phosphatidylethanolamine N-methyltransferase 1 (CHO2-1).